A 144-amino-acid polypeptide reads, in one-letter code: Large ribosomal subunit protein uL16 (144 aa).

It belongs to the universal ribosomal protein uL16 family. In terms of assembly, part of the 50S ribosomal subunit.

In terms of biological role, binds 23S rRNA and is also seen to make contacts with the A and possibly P site tRNAs. The sequence is that of Large ribosomal subunit protein uL16 from Clostridium botulinum (strain Alaska E43 / Type E3).